The sequence spans 417 residues: Methyltransferase/ribosomally synthesized cyclic peptide omphalotin A precursor ophMA (417 aa).

The methyltransferase domain stretch occupies residues Met-1 to Lys-251. Catalysis depends on residues Arg-72, Tyr-76, and Tyr-98. S-adenosyl-L-methionine contacts are provided by Tyr-98, His-100, Val-103, Ala-130, Gln-172, Ala-213, Ser-244, and Thr-245. Residues Ala-252–Met-378 are clasp domain. Positions Pro-379 to Pro-399 are precursor leader. N-methylvaline occurs at positions 401, 403, and 404. Residue Gly-405 is modified to N-methylglycine. Residue Val-406 is modified to N-methylvaline. Ile-407 bears the N-methylisoleucine mark. An N-methylglycine modification is found at Gly-408. Position 410 is an N-methylisoleucine (Ile-410). Position 411 is an N-methylglycine (Gly-411). Val-413 bears the N-methylvaline mark.

It in the N-terminal section; belongs to the precorrin methyltransferase family. As to quaternary structure, homodimer. Post-translationally, ophMA automethylates at Val-401, Val-403, Val-404, Gly-405, Val-406, Ile-407, Gly-408, Ile-410, Gly-411 and Val-413 before being processed by the prolyloligopeptidase ophP which likely forms a peptidyl ester upon removal of the follower propeptide, which then undergoes macrocyclization with the N-terminus of the modified core peptide. Peptide backbone alpha-N-methylations change the physicochemical properties of amide bonds to provide structural constraints and other favorable characteristics including biological membrane permeability to peptides.

It functions in the pathway mycotoxin biosynthesis. Fusion protein of the methyltransferase ophM and the omphalotin core peptide; part of the gene cluster that mediates the biosynthesis of omphalotin A, a highly methylated cyclic dodecapeptide with nematodicidal activity. Omphalotin A derives from the C-terminus of the ophMA protein, and it is the ophMA protein that methylates its own C-terminus using S-adenosyl methionine (SAM). The C-terminus is subsequently cleaved off and macrocyclized by the prolyloligopeptidase ophP to give the final product. The chain is Methyltransferase/ribosomally synthesized cyclic peptide omphalotin A precursor ophMA from Omphalotus olearius (Jack o'lantern).